The chain runs to 790 residues: Pentatricopeptide repeat-containing protein OTP51, chloroplastic (790 aa).

The N-terminal 56 residues, 1-56, are a transit peptide targeting the chloroplast; that stretch reads MATTSPCAAPSPSLRCPLALSHPFASPPPPPALRLAGPKLLPGRLAVSPPPGIPAV. 10 PPR repeats span residues 182-216, 217-254, 256-296, 299-333, 334-368, 369-403, 404-438, 439-469, 473-507, and 509-543; these read NFAL…GRVP, AEST…GGYK, RLSL…NLDV, DVYA…GFDE, GIDV…GSDL, PVQA…NIPP, NVAS…DMKH, LMPA…CIAR, NRIL…GMIG, and NTKS…KYDV. The disordered stretch occupies residues 762–790; sequence GSSIGSDGTQDTDTDSDDDMQMSDTERDE. The segment covering 771–790 has biased composition (acidic residues); that stretch reads QDTDTDSDDDMQMSDTERDE.

This sequence belongs to the PPR family. P subfamily.

The protein resides in the plastid. It is found in the chloroplast. Functionally, promotes the splicing of group II introns in chloroplasts. Required for the splicing of intron 2 of plastid ycf3 transcripts, a factor required for the assembly of photosystem I (PSI). Involved in the splicing of atpF, ndhA, petB and rps16 chloroplastic transcripts. Required for the assembly of PSI. The chain is Pentatricopeptide repeat-containing protein OTP51, chloroplastic from Oryza sativa subsp. japonica (Rice).